A 249-amino-acid polypeptide reads, in one-letter code: Mannose-binding protein C (249 aa).

An N-terminal signal peptide occupies residues 1-20 (MSLFTSLPFLLLTAVTASCA). The region spanning 43 to 101 (GINGIPGKDGRDGAKGEKGEPGQGLRGSQGPPGKMGPQGTPGIPGIPGPIGQKGDPGEN) is the Collagen-like domain. A disordered region spans residues 43–103 (GINGIPGKDG…QKGDPGENMG (61 aa)). The residue at position 48 (proline 48) is a 4-hydroxyproline. Residues 50–62 (KDGRDGAKGEKGE) are compositionally biased toward basic and acidic residues. 4-hydroxyproline is present on residues proline 63, proline 74, proline 83, and proline 86. Residues 79-95 (PQGTPGIPGIPGPIGQK) are compositionally biased toward low complexity. A coiled-coil region spans residues 113-131 (RATLQSELNQIKNWLIFSL). The region spanning 135–246 (VGKKAFFTNG…CSASFLTVCE (112 aa)) is the C-type lectin domain. 2 disulfide bridges follow: cysteine 156–cysteine 245 and cysteine 223–cysteine 237.

In terms of assembly, oligomeric complex of 3 or more homotrimers. Interacts with MASP1 and MASP2. Interacts with MEP1A and MEP1B and may inhibit their catalytic activity. Post-translationally, hydroxylation on proline residues within the sequence motif, GXPG, is most likely to be 4-hydroxy as this fits the requirement for 4-hydroxylation in vertebrates.

Its subcellular location is the secreted. Calcium-dependent lectin involved in innate immune defense. Binds mannose, fucose and N-acetylglucosamine on different microorganisms and activates the lectin complement pathway. Binds to late apoptotic cells, as well as to apoptotic blebs and to necrotic cells, but not to early apoptotic cells, facilitating their uptake by macrophages. The polypeptide is Mannose-binding protein C (MBL) (Bos taurus (Bovine)).